Reading from the N-terminus, the 58-residue chain is MSEIKVGENESLENALRRFKKKCARAGVLSEVRKREHYEKPSVKKKKKSEAARKRKFK.

Basic and acidic residues predominate over residues 32-42 (VRKREHYEKPS). The disordered stretch occupies residues 32–58 (VRKREHYEKPSVKKKKKSEAARKRKFK). Positions 43 to 58 (VKKKKKSEAARKRKFK) are enriched in basic residues.

This sequence belongs to the bacterial ribosomal protein bS21 family.

The polypeptide is Small ribosomal subunit protein bS21 (Clostridium botulinum (strain Okra / Type B1)).